A 98-amino-acid polypeptide reads, in one-letter code: Keratin-associated protein 3-1 (98 aa).

Ala2 carries the N-acetylalanine modification. A run of 4 repeats spans residues 3–7, 8–12, 47–51, and 55–59. Positions 3 to 59 are 4 X 5 AA repeats of C-C-X(3); sequence CCAPRCCSVRTGPATTICSSDQFCRCGVCLPSTCPHDISLLQPTFCDNSPVPYHVPD.

It belongs to the KRTAP type 3 family. As to quaternary structure, interacts with wool keratins. As to expression, wool.

In terms of biological role, in the wool cortex, wool keratin intermediate filaments are embedded in an interfilamentous matrix, consisting of hair keratin-associated proteins (KRTAP), which are essential for the formation of a rigid and resistant wool shaft through their extensive disulfide bond cross-linking with abundant cysteine residues of wool keratins. The matrix proteins include the high-sulfur and high-glycine-tyrosine keratins. The polypeptide is Keratin-associated protein 3-1 (KRTAP3-1) (Capra hircus (Goat)).